We begin with the raw amino-acid sequence, 286 residues long: Polyamine aminopropyltransferase (286 aa).

Residues 5-238 (TMWHETLHDQ…GIMTFAWATD (234 aa)) enclose the PABS domain. Gln33 contacts S-methyl-5'-thioadenosine. His64 and Asp88 together coordinate spermidine. Residues Glu108 and 140 to 141 (DG) contribute to the S-methyl-5'-thioadenosine site. The active-site Proton acceptor is Asp158. 158–161 (DCTD) lines the spermidine pocket. Pro165 is an S-methyl-5'-thioadenosine binding site.

The protein belongs to the spermidine/spermine synthase family. Homodimer or homotetramer.

The protein resides in the cytoplasm. The enzyme catalyses S-adenosyl 3-(methylsulfanyl)propylamine + putrescine = S-methyl-5'-thioadenosine + spermidine + H(+). It functions in the pathway amine and polyamine biosynthesis; spermidine biosynthesis; spermidine from putrescine: step 1/1. In terms of biological role, catalyzes the irreversible transfer of a propylamine group from the amino donor S-adenosylmethioninamine (decarboxy-AdoMet) to putrescine (1,4-diaminobutane) to yield spermidine. In Salmonella typhi, this protein is Polyamine aminopropyltransferase.